A 450-amino-acid chain; its full sequence is Putative zinc metalloprotease TP_0600 (450 aa).

Histidine 18 lines the Zn(2+) pocket. Residue glutamate 19 is part of the active site. Histidine 22 is a Zn(2+) binding site. The chain crosses the membrane as a helical span at residues 102–124; sequence IAFAGPLANVLMAVMVLALVSAL. One can recognise a PDZ domain in the interval 200 to 278; sequence TITPDRDAHT…SVVLTVLRSG (79 aa). Helical transmembrane passes span 384–406 and 421–443; these read VCVS…LILF and VLYY…AFWN.

The protein belongs to the peptidase M50B family. Zn(2+) serves as cofactor.

It is found in the cell inner membrane. The polypeptide is Putative zinc metalloprotease TP_0600 (Treponema pallidum (strain Nichols)).